A 244-amino-acid polypeptide reads, in one-letter code: tRNA (guanine-N(7)-)-methyltransferase (244 aa).

A disordered region spans residues 1 to 20 (MTNPFDSAGSKAPPKPFTVS). Residues glutamate 75, glutamate 100, aspartate 127, and aspartate 150 each contribute to the S-adenosyl-L-methionine site. Aspartate 150 is an active-site residue. Residue lysine 154 coordinates substrate. Positions 156–161 (RHNKRR) are interaction with RNA. Substrate-binding positions include aspartate 186 and 223-226 (THFE).

It belongs to the class I-like SAM-binding methyltransferase superfamily. TrmB family.

It carries out the reaction guanosine(46) in tRNA + S-adenosyl-L-methionine = N(7)-methylguanosine(46) in tRNA + S-adenosyl-L-homocysteine. Its pathway is tRNA modification; N(7)-methylguanine-tRNA biosynthesis. Functionally, catalyzes the formation of N(7)-methylguanine at position 46 (m7G46) in tRNA. The sequence is that of tRNA (guanine-N(7)-)-methyltransferase from Stenotrophomonas maltophilia (strain K279a).